Here is a 54-residue protein sequence, read N- to C-terminus: Small ribosomal subunit protein uS14 (54 aa).

Zn(2+) contacts are provided by C19, C22, C37, and C40.

Belongs to the universal ribosomal protein uS14 family. Zinc-binding uS14 subfamily. In terms of assembly, part of the 30S ribosomal subunit. Zn(2+) serves as cofactor.

In terms of biological role, binds 16S rRNA, required for the assembly of 30S particles. This is Small ribosomal subunit protein uS14 from Sulfurisphaera tokodaii (strain DSM 16993 / JCM 10545 / NBRC 100140 / 7) (Sulfolobus tokodaii).